Reading from the N-terminus, the 406-residue chain is Cysteine desulfurase (406 aa).

N6-(pyridoxal phosphate)lysine is present on Lys226. The Cysteine persulfide intermediate role is filled by Cys364.

This sequence belongs to the class-V pyridoxal-phosphate-dependent aminotransferase family. Csd subfamily. As to quaternary structure, homodimer. Interacts with SufE and the SufBCD complex composed of SufB, SufC and SufD. The interaction with SufE is required to mediate the direct transfer of the sulfur atom from the S-sulfanylcysteine. The cofactor is pyridoxal 5'-phosphate.

The protein localises to the cytoplasm. It carries out the reaction (sulfur carrier)-H + L-cysteine = (sulfur carrier)-SH + L-alanine. The catalysed reaction is L-selenocysteine + AH2 = hydrogenselenide + L-alanine + A + H(+). Its pathway is cofactor biosynthesis; iron-sulfur cluster biosynthesis. Its function is as follows. Cysteine desulfurases mobilize the sulfur from L-cysteine to yield L-alanine, an essential step in sulfur metabolism for biosynthesis of a variety of sulfur-containing biomolecules. Component of the suf operon, which is activated and required under specific conditions such as oxidative stress and iron limitation. Acts as a potent selenocysteine lyase in vitro, that mobilizes selenium from L-selenocysteine. Selenocysteine lyase activity is however unsure in vivo. The chain is Cysteine desulfurase from Salmonella heidelberg (strain SL476).